Here is a 779-residue protein sequence, read N- to C-terminus: Ribonucleoside-diphosphate reductase large subunit (779 aa).

Substrate contacts are provided by residues serine 178, 193–194 (SC), glycine 222, 420–424 (NLCIE), and 614–618 (PTATS). A disulfide bridge connects residues cysteine 194 and cysteine 440. The active-site Proton acceptor is asparagine 420. Cysteine 422 acts as the Cysteine radical intermediate in catalysis. The active-site Proton acceptor is the glutamate 424.

The protein belongs to the ribonucleoside diphosphate reductase large chain family. In terms of assembly, heterotetramer composed of a homodimer of the large subunit (R1) and a homodimer of the small subunit (R2). Larger multisubunit protein complex are also active, composed of (R1)n(R2)n.

It catalyses the reaction a 2'-deoxyribonucleoside 5'-diphosphate + [thioredoxin]-disulfide + H2O = a ribonucleoside 5'-diphosphate + [thioredoxin]-dithiol. With respect to regulation, under complex allosteric control mediated by deoxynucleoside triphosphates and ATP binding. The type of nucleotide bound at the specificity site determines substrate preference. It seems probable that ATP makes the enzyme reduce CDP and UDP, dGTP favors ADP reduction and dTTP favors GDP reduction. In terms of biological role, ribonucleoside-diphosphate reductase holoenzyme provides the precursors necessary for viral DNA synthesis. Allows virus growth in non-dividing cells. Catalyzes the biosynthesis of deoxyribonucleotides from the corresponding ribonucleotides. This is Ribonucleoside-diphosphate reductase large subunit from Ornithodoros (relapsing fever ticks).